The sequence spans 412 residues: Pyruvate dehydrogenase E1 component subunit alpha, mitochondrial (412 aa).

Positions 104, 130, 131, 169, 177, 179, 208, 209, 210, 237, and 239 each coordinate pyruvate. Residues tyrosine 130 and arginine 131 each coordinate thiamine diphosphate. Thiamine diphosphate contacts are provided by glycine 177, valine 179, aspartate 208, glycine 209, alanine 210, and asparagine 237. Aspartate 208 contacts Mg(2+). Positions 237 and 239 each coordinate Mg(2+). Histidine 304 contributes to the thiamine diphosphate binding site.

Tetramer of 2 alpha and 2 beta subunits. The cofactor is thiamine diphosphate. It depends on Mg(2+) as a cofactor.

Its subcellular location is the mitochondrion matrix. The catalysed reaction is N(6)-[(R)-lipoyl]-L-lysyl-[protein] + pyruvate + H(+) = N(6)-[(R)-S(8)-acetyldihydrolipoyl]-L-lysyl-[protein] + CO2. Its activity is regulated as follows. E1 activity is regulated by phosphorylation (inactivation) and dephosphorylation (activation) of the alpha subunit. Its function is as follows. The pyruvate dehydrogenase complex catalyzes the overall conversion of pyruvate to acetyl-CoA and CO(2). It contains multiple copies of three enzymatic components: pyruvate dehydrogenase (E1), dihydrolipoamide acetyltransferase (E2) and lipoamide dehydrogenase (E3). The sequence is that of Pyruvate dehydrogenase E1 component subunit alpha, mitochondrial (PDA1) from Kluyveromyces lactis (strain ATCC 8585 / CBS 2359 / DSM 70799 / NBRC 1267 / NRRL Y-1140 / WM37) (Yeast).